The sequence spans 355 residues: uncharacterized protein (355 aa).

This is an uncharacterized protein from Acanthamoeba polyphaga (Amoeba).